A 116-amino-acid chain; its full sequence is MTNKIIQQLEAEQMTKEIPPFAPGDTVIVQVKVKEGDRQRLQAFEGVVIGKRNRGLNSAFTVRKISNGVGVERTFQSYSPMVDSISVKRRGDVRKAKLYYLRALSGKAARIKEKLV.

This sequence belongs to the bacterial ribosomal protein bL19 family.

Functionally, this protein is located at the 30S-50S ribosomal subunit interface and may play a role in the structure and function of the aminoacyl-tRNA binding site. The polypeptide is Large ribosomal subunit protein bL19 (Stutzerimonas stutzeri (strain A1501) (Pseudomonas stutzeri)).